Reading from the N-terminus, the 210-residue chain is Na(+)-translocating NADH-quinone reductase subunit D (210 aa).

6 consecutive transmembrane segments (helical) span residues 10–30 (ILFA…GVCS), 42–62 (FVMT…VSLI), 72–92 (IIVQ…VLKA), 103–123 (VFVG…AYAM), 131–151 (FIDG…VAFF), and 178–198 (NGLM…IWAI).

It belongs to the NqrDE/RnfAE family. Composed of six subunits; NqrA, NqrB, NqrC, NqrD, NqrE and NqrF.

Its subcellular location is the cell inner membrane. The enzyme catalyses a ubiquinone + n Na(+)(in) + NADH + H(+) = a ubiquinol + n Na(+)(out) + NAD(+). NQR complex catalyzes the reduction of ubiquinone-1 to ubiquinol by two successive reactions, coupled with the transport of Na(+) ions from the cytoplasm to the periplasm. NqrA to NqrE are probably involved in the second step, the conversion of ubisemiquinone to ubiquinol. This chain is Na(+)-translocating NADH-quinone reductase subunit D, found in Photobacterium profundum (strain SS9).